Reading from the N-terminus, the 331-residue chain is Ribose-phosphate pyrophosphokinase (331 aa).

55 to 57 lines the ATP pocket; sequence DGE. Mg(2+) is bound by residues His-148 and Asp-187. Lys-211 is an active-site residue. D-ribose 5-phosphate is bound by residues Arg-213, Asp-237, and 241–245; that span reads DTGGT.

This sequence belongs to the ribose-phosphate pyrophosphokinase family. Class I subfamily. Homohexamer. Requires Mg(2+) as cofactor.

It localises to the cytoplasm. The catalysed reaction is D-ribose 5-phosphate + ATP = 5-phospho-alpha-D-ribose 1-diphosphate + AMP + H(+). Its pathway is metabolic intermediate biosynthesis; 5-phospho-alpha-D-ribose 1-diphosphate biosynthesis; 5-phospho-alpha-D-ribose 1-diphosphate from D-ribose 5-phosphate (route I): step 1/1. In terms of biological role, involved in the biosynthesis of the central metabolite phospho-alpha-D-ribosyl-1-pyrophosphate (PRPP) via the transfer of pyrophosphoryl group from ATP to 1-hydroxyl of ribose-5-phosphate (Rib-5-P). The polypeptide is Ribose-phosphate pyrophosphokinase (Prochlorococcus marinus subsp. pastoris (strain CCMP1986 / NIES-2087 / MED4)).